The primary structure comprises 575 residues: Triokinase/FMN cyclase (575 aa).

The 328-residue stretch at 9–336 (SVAGCADDAL…IDAETTAAAW (328 aa)) folds into the DhaK domain. Residues 56–59 (GSGH), lysine 109, and aspartate 114 each bind dihydroxyacetone. Histidine 221 serves as the catalytic Tele-hemiaminal-histidine intermediate. Residues 348–367 (KRSRVAPAEPQEAPDSTAAG) are disordered. The residue at position 350 (serine 350) is a Phosphoserine. Residues 372–571 (KRMALVLERV…AAAILRAILE (200 aa)) enclose the DhaL domain. Residues 401 to 404 (DGDC), 446 to 447 (SS), glycine 486, and 494 to 495 (TM) contribute to the ATP site. 2 positions are modified to phosphoserine: serine 511 and serine 545. 556 to 558 (DPG) contributes to the ATP binding site.

Belongs to the dihydroxyacetone kinase (DAK) family. Homodimer. Interacts with IFIH1 (via the CARD domains), the interaction is inhibited by viral infection. The cofactor is Mg(2+). Mn(2+) is required as a cofactor. It depends on Co(2+) as a cofactor. In terms of tissue distribution, detected in erythrocytes (at protein level).

It carries out the reaction dihydroxyacetone + ATP = dihydroxyacetone phosphate + ADP + H(+). The catalysed reaction is D-glyceraldehyde + ATP = D-glyceraldehyde 3-phosphate + ADP + H(+). The enzyme catalyses FAD = riboflavin cyclic-4',5'-phosphate + AMP + H(+). Its activity is regulated as follows. Each activity is inhibited by the substrate(s) of the other. In terms of biological role, catalyzes both the phosphorylation of dihydroxyacetone and of glyceraldehyde, and the splitting of ribonucleoside diphosphate-X compounds among which FAD is the best substrate. Represses IFIH1-mediated cellular antiviral response. This Homo sapiens (Human) protein is Triokinase/FMN cyclase.